Here is a 566-residue protein sequence, read N- to C-terminus: Arginine--tRNA ligase (566 aa).

A 'HIGH' region motif is present at residues 121 to 131 (ANPNGPFHIGH).

It belongs to the class-I aminoacyl-tRNA synthetase family.

The protein localises to the cytoplasm. It carries out the reaction tRNA(Arg) + L-arginine + ATP = L-arginyl-tRNA(Arg) + AMP + diphosphate. The protein is Arginine--tRNA ligase of Methanococcus maripaludis (strain C6 / ATCC BAA-1332).